The primary structure comprises 268 residues: Interleukin-1 alpha (268 aa).

A propeptide spanning residues 1-112 (MAKVPDLFED…NTEEEIIKPR (112 aa)) is cleaved from the precursor. At K82 the chain carries N6-acetyllysine. A nuclear localization signal (NLS) region spans residues 82–86 (KKRRL). At S87 the chain carries Phosphoserine. N-linked (GlcNAc...) asparagine glycosylation is found at N102 and N141.

Belongs to the IL-1 family. In terms of assembly, monomer. Interacts with TMED10; the interaction mediates the translocation from the cytoplasm into the ERGIC (endoplasmic reticulum-Golgi intermediate compartment) and thereby secretion. Interacts with IL1R1. Interacts with S100A13; this interaction is the first step in the export of IL1A, followed by direct translocation of this complex across the plasma membrane. Post-translationally, acetylated within its nuclear localization sequence, which impacts subcellular localization. Proteolytic processed by CAPN1 in a calcium-dependent manner. Cleavage from 31 kDa precursor to 18 kDa biologically active molecules. In terms of processing, phosphorylated. Phosphorylation greatly enhances susceptibility to digestion and promotes the conversion of pre-IL1A alpha to the biologically active IL1A.

It is found in the nucleus. Its subcellular location is the cytoplasm. The protein localises to the secreted. Functionally, cytokine constitutively present intracellularly in nearly all resting non-hematopoietic cells that plays an important role in inflammation and bridges the innate and adaptive immune systems. After binding to its receptor IL1R1 together with its accessory protein IL1RAP, forms the high affinity interleukin-1 receptor complex. Signaling involves the recruitment of adapter molecules such as MYD88, IRAK1 or IRAK4. In turn, mediates the activation of NF-kappa-B and the three MAPK pathways p38, p42/p44 and JNK pathways. Within the cell, acts as an alarmin and cell death results in its liberation in the extracellular space after disruption of the cell membrane to induce inflammation and alert the host to injury or damage. In addition to its role as a danger signal, which occurs when the cytokine is passively released by cell necrosis, directly senses DNA damage and acts as signal for genotoxic stress without loss of cell integrity. This chain is Interleukin-1 alpha (IL1A), found in Bos taurus (Bovine).